The sequence spans 628 residues: 1,4-alpha-glucan branching enzyme GlgB (628 aa).

The Nucleophile role is filled by aspartate 304. The active-site Proton donor is glutamate 355.

This sequence belongs to the glycosyl hydrolase 13 family. GlgB subfamily. As to quaternary structure, monomer.

The enzyme catalyses Transfers a segment of a (1-&gt;4)-alpha-D-glucan chain to a primary hydroxy group in a similar glucan chain.. Its pathway is glycan biosynthesis; glycogen biosynthesis. In terms of biological role, catalyzes the formation of the alpha-1,6-glucosidic linkages in glycogen by scission of a 1,4-alpha-linked oligosaccharide from growing alpha-1,4-glucan chains and the subsequent attachment of the oligosaccharide to the alpha-1,6 position. This Streptococcus mutans serotype c (strain ATCC 700610 / UA159) protein is 1,4-alpha-glucan branching enzyme GlgB.